Here is a 245-residue protein sequence, read N- to C-terminus: Uridylate kinase (245 aa).

An ATP-binding site is contributed by K18–G21. Residue G60 coordinates UMP. Residues G61 and R65 each contribute to the ATP site. Residues D80 and T141–T148 each bind UMP. 3 residues coordinate ATP: T168, Y174, and D177.

This sequence belongs to the UMP kinase family. Homohexamer.

It is found in the cytoplasm. The enzyme catalyses UMP + ATP = UDP + ADP. It functions in the pathway pyrimidine metabolism; CTP biosynthesis via de novo pathway; UDP from UMP (UMPK route): step 1/1. With respect to regulation, inhibited by UTP. Functionally, catalyzes the reversible phosphorylation of UMP to UDP. This chain is Uridylate kinase, found in Pseudomonas paraeruginosa (strain DSM 24068 / PA7) (Pseudomonas aeruginosa (strain PA7)).